Here is an 8892-residue protein sequence, read N- to C-terminus: Nonribosomal peptide synthetase 32 (8892 aa).

A Carrier 1 domain is found at 12–85; sequence EPSKLVLGRV…QLAESIAQQN (74 aa). An O-(pantetheine 4'-phosphoryl)serine modification is found at Ser46. The interval 88 to 112 is disordered; sequence AGNGVNGHANGNGMNGNGLHNEATI. The span at 93-108 shows a compositional bias: low complexity; the sequence is NGHANGNGMNGNGLHN. Residues 567 to 956 are condensation 1; sequence PTSANVPRRV…EGVDLSVRDF (390 aa). Residues 989 to 1386 form an adenylation 1 region; sequence KMAEQPEALA…GRIDSQIKIR (398 aa). Residues 1523–1599 form the Carrier 2 domain; the sequence is ISATAVEREL…ELAAEVQATQ (77 aa). Position 1560 is an O-(pantetheine 4'-phosphoryl)serine (Ser1560). Residues 1609–2039 form an epimerization 1 region; the sequence is GAIALSPIQQ…YGQTVKSLVN (431 aa). The segment at 2083-2518 is condensation 2; the sequence is EDILPCSPIQ…LLLPAEEAKL (436 aa). The tract at residues 2543-2934 is adenylation 2; the sequence is SQPEALAVSA…GRRDTQVKIR (392 aa). Positions 3061–3137 constitute a Carrier 3 domain; the sequence is SSATPIEREL…ELAANSQTGR (77 aa). An O-(pantetheine 4'-phosphoryl)serine modification is found at Ser3098. The segment at 3153-3590 is epimerization 2; that stretch reads LSPIQQMFFD…GDTVKTLVEE (438 aa). Residues 3634-4061 form a condensation 3 region; sequence EDILPCSAIQ…NVDRPLRELT (428 aa). An adenylation 3 region spans residues 4098 to 4488; that stretch reads TLPEALAISS…GRIDSQIKIR (391 aa). The 77-residue stretch at 4627-4703 folds into the Carrier 4 domain; sequence APTTDLERKL…DLSRVVEEKC (77 aa). The residue at position 4664 (Ser4664) is an O-(pantetheine 4'-phosphoryl)serine. The condensation 4 stretch occupies residues 4760-5181; it reads EDVYPCSPMQ…LLTDEDCDQL (422 aa). The tract at residues 5205–5605 is adenylation 4; that stretch reads TSYPTAPAIS…GRRDTQVKIR (401 aa). The region spanning 5745–5821 is the Carrier 5 domain; that stretch reads MPTTPMEQKL…DLAEAMEEKG (77 aa). Ser5782 carries the O-(pantetheine 4'-phosphoryl)serine modification. Residues 5868–6285 are condensation 5; the sequence is EDVYPCSPLQ…LLSPGQMAQI (418 aa). The interval 6307–6700 is adenylation 5; sequence QMTTRPAATA…GRIDTQIKIR (394 aa). The Carrier 6 domain maps to 6834–6911; that stretch reads ELTTTIERQL…ELATQTQTTE (78 aa). At Ser6872 the chain carries O-(pantetheine 4'-phosphoryl)serine. The segment at 6923–7360 is epimerization 3; that stretch reads NFQLSPIQQM…SYSCAIESLV (438 aa). Positions 7403 to 7834 are condensation 6; sequence VQDILPCSPI…LLPAGDANQI (432 aa). The segment at 7855-8253 is adenylation 6; that stretch reads QQMAAHPTAQ…LDRIGTQVKI (399 aa). The region spanning 8380–8456 is the Carrier 7 domain; sequence APVGRNEEIL…AMAARVTADI (77 aa). Ser8417 bears the O-(pantetheine 4'-phosphoryl)serine mark. Residues 8490–8878 form a condensation 7 region; sequence HFAFDATGPC…EIIEDSGCNV (389 aa).

It belongs to the NRP synthetase family.

It participates in secondary metabolite biosynthesis. Nonribosomal peptide synthetase; part of the gene cluster that mediates the biosynthesis of the lipopeptides W493 A and B. W493 A and B consist of six amino acid residues D-allo-thr, L-Ala, D-Ala, L-Gln, D-Tyr, and L-Val/L-Ile linked to a 3-hydroxy-4-methyltetradecanoic acid polyketide chain. The biosynthesis starts with formation of the linear polyketide chain by the highly reducing polyketide synthase PKS40. The gene cluster contains a putative acyl-CoA ligase (FPSE_09184) for formation of a CoA thioester polyketide. The thiol bond could be hydrolyzed by the putative thioesterase (FPSE_09186) and then accepted by the first T domain in module 1 of NRPS32. The second T domain is responsible for accepting a threonine, which is adenylated by the A domain and epimerized to the D-allo-threonine formed by the E domain. The five successive modules incorporate Ala, Ala, Gln, Tyr, and Val/Ile into the final product, which is released by cyclization. The sequence is that of Nonribosomal peptide synthetase 32 from Fusarium pseudograminearum (strain CS3096) (Wheat and barley crown-rot fungus).